The primary structure comprises 216 residues: Sugar fermentation stimulation protein homolog (216 aa).

The protein belongs to the SfsA family.

In Thermoplasma volcanium (strain ATCC 51530 / DSM 4299 / JCM 9571 / NBRC 15438 / GSS1), this protein is Sugar fermentation stimulation protein homolog.